Here is a 292-residue protein sequence, read N- to C-terminus: Protein/nucleic acid deglycase HchA (292 aa).

The segment covering 1–12 has biased composition (polar residues); sequence MSQDVNKLSKQP. Positions 1–23 are disordered; the sequence is MSQDVNKLSKQPTPDKAEDNAFF. The Nucleophile role is filled by Cys190.

Belongs to the peptidase C56 family. HchA subfamily.

The protein localises to the cytoplasm. It carries out the reaction N(omega)-(1-hydroxy-2-oxopropyl)-L-arginyl-[protein] + H2O = lactate + L-arginyl-[protein] + H(+). The catalysed reaction is N(6)-(1-hydroxy-2-oxopropyl)-L-lysyl-[protein] + H2O = lactate + L-lysyl-[protein] + H(+). The enzyme catalyses S-(1-hydroxy-2-oxopropyl)-L-cysteinyl-[protein] + H2O = lactate + L-cysteinyl-[protein] + H(+). It catalyses the reaction N(omega)-(1-hydroxy-2-oxoethyl)-L-arginyl-[protein] + H2O = L-arginyl-[protein] + glycolate + H(+). It carries out the reaction N(6)-(1-hydroxy-2-oxoethyl)-L-lysyl-[protein] + H2O = glycolate + L-lysyl-[protein] + H(+). The catalysed reaction is S-(1-hydroxy-2-oxoethyl)-L-cysteinyl-[protein] + H2O = glycolate + L-cysteinyl-[protein] + H(+). The enzyme catalyses N(2)-(1-hydroxy-2-oxopropyl)-dGTP + H2O = lactate + dGTP + H(+). It catalyses the reaction N(2)-(1-hydroxy-2-oxopropyl)-GTP + H2O = lactate + GTP + H(+). It carries out the reaction N(2)-(1-hydroxy-2-oxopropyl)-GDP + H2O = lactate + GDP + H(+). The catalysed reaction is N(2)-(1-hydroxy-2-oxopropyl)-GMP + H2O = lactate + GMP + H(+). The enzyme catalyses N(2)-(1-hydroxy-2-oxoethyl)-dGTP + H2O = dGTP + glycolate + H(+). It catalyses the reaction N(2)-(1-hydroxy-2-oxoethyl)-GTP + H2O = glycolate + GTP + H(+). It carries out the reaction N(2)-(1-hydroxy-2-oxoethyl)-GDP + H2O = glycolate + GDP + H(+). The catalysed reaction is N(2)-(1-hydroxy-2-oxoethyl)-GMP + H2O = glycolate + GMP + H(+). The enzyme catalyses an N(2)-(1-hydroxy-2-oxopropyl)-guanosine in RNA + H2O = a guanosine in RNA + lactate + H(+). It catalyses the reaction an N(2)-(1-hydroxy-2-oxopropyl)-2'-deoxyguanosine in DNA + H2O = a 2'-deoxyguanosine in DNA + lactate + H(+). It carries out the reaction an N(2)-(1-hydroxy-2-oxoethyl)-guanosine in RNA + H2O = a guanosine in RNA + glycolate + H(+). The catalysed reaction is an N(2)-(1-hydroxy-2-oxoethyl)-2'-deoxyguanosine in DNA + H2O = a 2'-deoxyguanosine in DNA + glycolate + H(+). Functionally, protein and nucleotide deglycase that catalyzes the deglycation of the Maillard adducts formed between amino groups of proteins or nucleotides and reactive carbonyl groups of glyoxals. Thus, functions as a protein deglycase that repairs methylglyoxal- and glyoxal-glycated proteins, and releases repaired proteins and lactate or glycolate, respectively. Deglycates cysteine, arginine and lysine residues in proteins, and thus reactivates these proteins by reversing glycation by glyoxals. Acts on early glycation intermediates (hemithioacetals and aminocarbinols), preventing the formation of Schiff bases and advanced glycation endproducts (AGE). Also functions as a nucleotide deglycase able to repair glycated guanine in the free nucleotide pool (GTP, GDP, GMP, dGTP) and in DNA and RNA. Is thus involved in a major nucleotide repair system named guanine glycation repair (GG repair), dedicated to reversing methylglyoxal and glyoxal damage via nucleotide sanitization and direct nucleic acid repair. Plays an important role in protecting cells from carbonyl stress. In Staphylococcus aureus (strain MRSA252), this protein is Protein/nucleic acid deglycase HchA.